The sequence spans 185 residues: TATA-box-binding protein (185 aa).

Repeat copies occupy residues 3 to 78 (IQNI…REDL) and 94 to 176 (IQNI…AEKI).

It belongs to the TBP family.

General factor that plays a role in the activation of archaeal genes transcribed by RNA polymerase. Binds specifically to the TATA box promoter element which lies close to the position of transcription initiation. This is TATA-box-binding protein from Methanopyrus kandleri (strain AV19 / DSM 6324 / JCM 9639 / NBRC 100938).